We begin with the raw amino-acid sequence, 336 residues long: Fructose-1,6-bisphosphatase class 1 (336 aa).

Positions 90, 112, 114, and 115 each coordinate Mg(2+). Substrate contacts are provided by residues 115–118 (DGSS), N211, and K277. A Mg(2+)-binding site is contributed by E283.

This sequence belongs to the FBPase class 1 family. In terms of assembly, homotetramer. Requires Mg(2+) as cofactor.

It localises to the cytoplasm. It catalyses the reaction beta-D-fructose 1,6-bisphosphate + H2O = beta-D-fructose 6-phosphate + phosphate. It functions in the pathway carbohydrate biosynthesis; gluconeogenesis. This chain is Fructose-1,6-bisphosphatase class 1, found in Pseudomonas entomophila (strain L48).